Reading from the N-terminus, the 195-residue chain is DnaJ homolog subfamily C member 5 (195 aa).

Positions 13–82 (GDSLYIVLGL…RNIYDKYGSL (70 aa)) constitute a J domain. A disordered region spans residues 162-195 (DMEKEGDGAIVVQPTSATETTQLTSDSHPSYHTE). Residues 174 to 189 (QPTSATETTQLTSDSH) are compositionally biased toward polar residues.

Palmitoylated. Palmitoylation occurs probably in the cysteine-rich domain and regulates DNAJC5 stable membrane attachment.

It localises to the cytoplasm. It is found in the cytosol. The protein localises to the membrane. Its subcellular location is the cytoplasmic vesicle. The protein resides in the secretory vesicle. It localises to the chromaffin granule membrane. It is found in the melanosome. The protein localises to the cell membrane. In terms of biological role, may have an important role in presynaptic function. May be involved in calcium-dependent neurotransmitter release at nerve endings. This is DnaJ homolog subfamily C member 5 from Tetronarce californica (Pacific electric ray).